Reading from the N-terminus, the 112-residue chain is Macrodomain Ori protein (112 aa).

A disordered region spans residues 91-112 (FHTLSGGKPQVEGAEDYTDSDD). Residues 103-112 (GAEDYTDSDD) are compositionally biased toward acidic residues.

Belongs to the MaoP family.

Its function is as follows. Involved in the organization of the Ori region of the chromosome into a macrodomain (MD). It constrains DNA mobility in the Ori macrodomain and limits long-distance DNA interactions with other chromosomal regions. The polypeptide is Macrodomain Ori protein (Escherichia coli O157:H7).